The chain runs to 214 residues: Probable nicotinate-nucleotide adenylyltransferase (214 aa).

The protein belongs to the NadD family.

It carries out the reaction nicotinate beta-D-ribonucleotide + ATP + H(+) = deamido-NAD(+) + diphosphate. Its pathway is cofactor biosynthesis; NAD(+) biosynthesis; deamido-NAD(+) from nicotinate D-ribonucleotide: step 1/1. Catalyzes the reversible adenylation of nicotinate mononucleotide (NaMN) to nicotinic acid adenine dinucleotide (NaAD). This is Probable nicotinate-nucleotide adenylyltransferase from Buchnera aphidicola subsp. Acyrthosiphon pisum (strain 5A).